The following is a 178-amino-acid chain: Small ribosomal subunit protein uS4 (178 aa).

An S4 RNA-binding domain is found at 104–166 (RRLQTIVYRK…PNSPMASENH (63 aa)). The interval 158–178 (NSPMASENHPERTAAVSEENQ) is disordered.

The protein belongs to the universal ribosomal protein uS4 family. As to quaternary structure, part of the 30S ribosomal subunit. Contacts protein S5. The interaction surface between S4 and S5 is involved in control of translational fidelity.

Its function is as follows. One of the primary rRNA binding proteins, it binds directly to 16S rRNA where it nucleates assembly of the body of the 30S subunit. In terms of biological role, with S5 and S12 plays an important role in translational accuracy. The sequence is that of Small ribosomal subunit protein uS4 from Methanococcus maripaludis (strain C6 / ATCC BAA-1332).